We begin with the raw amino-acid sequence, 401 residues long: 1-deoxy-D-xylulose 5-phosphate reductoisomerase (401 aa).

NADPH is bound by residues Thr-10, Gly-11, Ser-12, Ile-13, Gly-36, Arg-37, Asn-38, and Asn-124. Lys-125 serves as a coordination point for 1-deoxy-D-xylulose 5-phosphate. NADPH is bound at residue Glu-126. Asp-150 is a Mn(2+) binding site. Residues Ser-151, Glu-152, Ser-176, and His-199 each coordinate 1-deoxy-D-xylulose 5-phosphate. Glu-152 contributes to the Mn(2+) binding site. Gly-205 lines the NADPH pocket. 1-deoxy-D-xylulose 5-phosphate is bound by residues Ser-212, Asn-217, Lys-218, and Glu-221. Mn(2+) is bound at residue Glu-221.

Belongs to the DXR family. Mg(2+) is required as a cofactor. Mn(2+) serves as cofactor.

It catalyses the reaction 2-C-methyl-D-erythritol 4-phosphate + NADP(+) = 1-deoxy-D-xylulose 5-phosphate + NADPH + H(+). It functions in the pathway isoprenoid biosynthesis; isopentenyl diphosphate biosynthesis via DXP pathway; isopentenyl diphosphate from 1-deoxy-D-xylulose 5-phosphate: step 1/6. Its function is as follows. Catalyzes the NADPH-dependent rearrangement and reduction of 1-deoxy-D-xylulose-5-phosphate (DXP) to 2-C-methyl-D-erythritol 4-phosphate (MEP). The protein is 1-deoxy-D-xylulose 5-phosphate reductoisomerase of Acaryochloris marina (strain MBIC 11017).